A 276-amino-acid polypeptide reads, in one-letter code: Putative metal-binding protein TC_0696 (276 aa).

A signal peptide spans 1-18 (MRLLILLLFSFGIIYSHG). A divalent metal cation-binding residues include H59, H121, H185, and D256.

Belongs to the bacterial solute-binding protein 9 family.

It is found in the periplasm. Its function is as follows. Part of an ATP-binding cassette (ABC) transport system involved in metal import. Binds a metal with high affinity and specificity and delivers it to the membrane permease for translocation into the cytoplasm. This is Putative metal-binding protein TC_0696 from Chlamydia muridarum (strain MoPn / Nigg).